A 132-amino-acid chain; its full sequence is MQQLRKLRWGIAYIYASSNNTMIIITDLTGSETVARVSGGQVVKADRDKPSPYAAMMAAYKAAQIAMARGINAVHVKVRGPGGYGLKVPGPGAVAAIRALARAGMIIGRIEDVTPIPHDTIRPPGGRRGRRV.

Belongs to the universal ribosomal protein uS11 family. In terms of assembly, part of the 30S ribosomal subunit.

In terms of biological role, located on the platform of the 30S subunit. This Caldivirga maquilingensis (strain ATCC 700844 / DSM 13496 / JCM 10307 / IC-167) protein is Small ribosomal subunit protein uS11.